Here is a 403-residue protein sequence, read N- to C-terminus: N-isopropylammelide isopropyl amidohydrolase (403 aa).

Residues H60, H62, and H217 each contribute to the Zn(2+) site. Residue H249 is the Proton donor/acceptor of the active site. D303 serves as a coordination point for Zn(2+).

Belongs to the metallo-dependent hydrolases superfamily. N-acyl-D-amino-acid deacylase family. As to quaternary structure, homotetramer. Zn(2+) serves as cofactor.

Its subcellular location is the cytoplasm. It catalyses the reaction N-isopropylammelide + H2O + H(+) = isopropylamine + cyanurate. It participates in xenobiotic degradation; atrazine degradation; cyanurate from atrazine: step 3/3. With respect to regulation, inhibited by N-ethylammeline, N-hydroxyethylammeline, N-isopropylammeline, ammeline and 2-amino-4hydroxy-1,3,5-s-triazine. Transforms N-isopropylammelide to cyanuric acid and isopropylamine. The protein is N-isopropylammelide isopropyl amidohydrolase (atzC) of Pseudomonas sp. (strain ADP).